The chain runs to 361 residues: Thymidine kinase (361 aa).

Residue 17–24 (GPHGVGKS) participates in ATP binding. Residue E46 is the Proton acceptor of the active site. Substrate is bound by residues Y64 and Q88. Residue R184 coordinates ATP. R190 is a substrate binding site.

The protein belongs to the herpesviridae thymidine kinase family. Homodimer.

The enzyme catalyses thymidine + ATP = dTMP + ADP + H(+). Its function is as follows. Catalyzes the transfer of the gamma-phospho group of ATP to thymidine to generate dTMP in the salvage pathway of pyrimidine synthesis. The dTMP serves as a substrate for DNA polymerase during viral DNA replication. Allows the virus to be reactivated and to grow in non-proliferative cells lacking a high concentration of phosphorylated nucleic acid precursors. This chain is Thymidine kinase, found in Saimiriine herpesvirus 1 (strain MV-5-4-PSL) (SaHV-1).